Reading from the N-terminus, the 206-residue chain is Large ribosomal subunit protein bL25 (206 aa).

Positions 168 to 206 (DPEESVVTVEVPEDASESTAAPEAAAPAADAAAPAADAK) are disordered. Residues 184–206 (ESTAAPEAAAPAADAAAPAADAK) show a composition bias toward low complexity.

Belongs to the bacterial ribosomal protein bL25 family. CTC subfamily. Part of the 50S ribosomal subunit; part of the 5S rRNA/L5/L18/L25 subcomplex. Contacts the 5S rRNA. Binds to the 5S rRNA independently of L5 and L18.

Its function is as follows. This is one of the proteins that binds to the 5S RNA in the ribosome where it forms part of the central protuberance. The polypeptide is Large ribosomal subunit protein bL25 (Bifidobacterium longum (strain DJO10A)).